The sequence spans 269 residues: Imidazole glycerol phosphate synthase subunit HisF (269 aa).

Active-site residues include aspartate 23 and aspartate 142.

This sequence belongs to the HisA/HisF family. In terms of assembly, heterodimer of HisH and HisF.

The protein localises to the cytoplasm. The catalysed reaction is 5-[(5-phospho-1-deoxy-D-ribulos-1-ylimino)methylamino]-1-(5-phospho-beta-D-ribosyl)imidazole-4-carboxamide + L-glutamine = D-erythro-1-(imidazol-4-yl)glycerol 3-phosphate + 5-amino-1-(5-phospho-beta-D-ribosyl)imidazole-4-carboxamide + L-glutamate + H(+). Its pathway is amino-acid biosynthesis; L-histidine biosynthesis; L-histidine from 5-phospho-alpha-D-ribose 1-diphosphate: step 5/9. In terms of biological role, IGPS catalyzes the conversion of PRFAR and glutamine to IGP, AICAR and glutamate. The HisF subunit catalyzes the cyclization activity that produces IGP and AICAR from PRFAR using the ammonia provided by the HisH subunit. In Bordetella pertussis (strain Tohama I / ATCC BAA-589 / NCTC 13251), this protein is Imidazole glycerol phosphate synthase subunit HisF.